Consider the following 258-residue polypeptide: Ribosomal RNA small subunit methyltransferase A (258 aa).

Asn12, Leu14, Gly38, Glu59, Asp83, and Asn100 together coordinate S-adenosyl-L-methionine.

Belongs to the class I-like SAM-binding methyltransferase superfamily. rRNA adenine N(6)-methyltransferase family. RsmA subfamily.

It localises to the cytoplasm. It catalyses the reaction adenosine(1518)/adenosine(1519) in 16S rRNA + 4 S-adenosyl-L-methionine = N(6)-dimethyladenosine(1518)/N(6)-dimethyladenosine(1519) in 16S rRNA + 4 S-adenosyl-L-homocysteine + 4 H(+). Specifically dimethylates two adjacent adenosines (A1518 and A1519) in the loop of a conserved hairpin near the 3'-end of 16S rRNA in the 30S particle. May play a critical role in biogenesis of 30S subunits. This chain is Ribosomal RNA small subunit methyltransferase A, found in Metamycoplasma arthritidis (strain 158L3-1) (Mycoplasma arthritidis).